The primary structure comprises 483 residues: Altronate oxidoreductase (483 aa).

Position 18–29 (18–29 (IIQFGEGNFLRA)) interacts with NAD(+).

Belongs to the mannitol dehydrogenase family. UxaB subfamily.

The enzyme catalyses D-altronate + NAD(+) = keto-D-tagaturonate + NADH + H(+). It participates in carbohydrate metabolism; pentose and glucuronate interconversion. The protein is Altronate oxidoreductase of Shigella flexneri serotype 5b (strain 8401).